Consider the following 459-residue polypeptide: MGKEKTHINIVVIGHVDSGKSTTTGHLIYKCGGIDKRTIEKFEKEAQEMGKGSFKYAWVLDKLKAERERGITIDIALWKFETAKFYVTIIDAPGHRDFIKNMITGTSQADCAVLVVACGTGEFEAGISKNGQTREHALLAQTLGVKQMIVACNKMDSTEPPFSEKRFEEIITEVKSFIKKIGYNPATIPFVPISGFNGDNMLEPSANMSWYKGWSVERKEGNASGKTLLEALDCIIPPQRPTDRPLRLPLQDVYKIGGIGTVPVGRVETGVIKPGMVVTFAPQNVTTEVKSVEMHHESLPEAQPGDNVGFNVKNVSVKDIRRGSVCSDSKNDPAKESKSFTAQVIVMNHPGQIGAGYTPVLDCHTAHIACKFAELKEKVDRRTGKKVEDPPKFLKSGDAGIVELIPTKPLCVEAFTDYAPLGRFAVRDMRQTVAVGVIKGVTKDDGSGGKVTKSAAKKK.

Positions Lys-5–Thr-242 constitute a tr-type G domain. The G1 stretch occupies residues Gly-14–Ser-21. The segment at Gly-70–Asp-74 is G2. Positions Asp-91–Gly-94 are G3. Positions Asn-153–Asp-156 are G4. The tract at residues Ser-194–Phe-196 is G5. 2 positions are modified to 5-glutamyl glycerylphosphorylethanolamine: Glu-301 and Glu-374.

This sequence belongs to the TRAFAC class translation factor GTPase superfamily. Classic translation factor GTPase family. EF-Tu/EF-1A subfamily.

The protein resides in the cytoplasm. In terms of biological role, this protein promotes the GTP-dependent binding of aminoacyl-tRNA to the A-site of ribosomes during protein biosynthesis. This is Elongation factor 1-alpha 2 (eft-2) from Oscheius tipulae.